Here is a 259-residue protein sequence, read N- to C-terminus: Flap endonuclease Xni (259 aa).

Residue aspartate 109 participates in Mg(2+) binding. The 5'-3' exonuclease domain occupies 165–255; the sequence is VKPQQLSDYW…FNLQDLRFTA (91 aa). Residues leucine 176, isoleucine 187, and isoleucine 190 each contribute to the K(+) site. The interval 189–194 is interaction with DNA; that stretch reads GIGPKA.

It belongs to the Xni family. Requires Mg(2+) as cofactor. It depends on K(+) as a cofactor.

Has flap endonuclease activity. During DNA replication, flap endonucleases cleave the 5'-overhanging flap structure that is generated by displacement synthesis when DNA polymerase encounters the 5'-end of a downstream Okazaki fragment. This is Flap endonuclease Xni from Vibrio vulnificus (strain CMCP6).